Reading from the N-terminus, the 435-residue chain is MAASDTERDGLAPEKTSPDTDKKKEQSDVSVSPRASKHHYSRSRSRSRERKRKSDNEGRKHRSRSRSKEARRHESKDKSSKKHKSEEHNDKEHSSDKGRERLNSSENGEDRHKRKERKSSRGRSHSRSRSRERRHRSRSRERKKSRSRSRDRKKSRSRSRERKKSRSRSRERKRRIRSRSRSRSRHRHRSRSRSRTRSRSRDRKKRIEKPRRFSRSLSRTPSPPPFRGRNTAMDAQEALARRLERAKKLQEQREKEMVEKQKQQEIAAAAAATGGSVLNVAALLASGTQVTPQIAMAAQMAALQAKALAETGIAVPSYYNPAAVNPMKFAEQEKKRKMLWQGKKEGDKSQSAEIWEKLNFGNKDQNVKFRKLMGIKSEDEAGCSSVDEESYKTLKQQEEVFRNLDAQYEMARSQTHTQRGMGLGFTSSMRGMDTV.

A compositionally biased stretch (basic and acidic residues) spans 1-27; the sequence is MAASDTERDGLAPEKTSPDTDKKKEQS. The segment at 1–230 is disordered; it reads MAASDTERDG…PSPPPFRGRN (230 aa). Alanine 2 is modified (N-acetylalanine). At serine 4 the chain carries Phosphoserine. Threonine 6 and threonine 16 each carry phosphothreonine. Phosphoserine is present on residues serine 17, serine 30, and serine 32. Residues 35–51 are compositionally biased toward basic residues; sequence ASKHHYSRSRSRSRERK. Over residues 66-111 the composition is skewed to basic and acidic residues; the sequence is RSKEARRHESKDKSSKKHKSEEHNDKEHSSDKGRERLNSSENGEDR. Residue serine 104 is modified to Phosphoserine. Over residues 112–214 the composition is skewed to basic residues; the sequence is HKRKERKSSR…KRIEKPRRFS (103 aa). A coiled-coil region spans residues 230 to 272; the sequence is NTAMDAQEALARRLERAKKLQEQREKEMVEKQKQQEIAAAAAA. Residue lysine 376 forms a Glycyl lysine isopeptide (Lys-Gly) (interchain with G-Cter in SUMO1); alternate linkage. A Glycyl lysine isopeptide (Lys-Gly) (interchain with G-Cter in SUMO2); alternate cross-link involves residue lysine 376. The residue at position 377 (serine 377) is a Phosphoserine.

This sequence belongs to the RSRC2 family.

The sequence is that of Arginine/serine-rich coiled-coil protein 2 (RSRC2) from Bos taurus (Bovine).